Reading from the N-terminus, the 409-residue chain is MGERRDTTVIVGAGHAGTAAAFFLREFGYHGRVLLLSAETQHPYQRPPLSKEYLLAQHSTPSLLKGKDSYARADIELCLQDDVLSITPASRQVKSSQGSYTYDHLILATGSHPRFMATLGQADNLCYLSDWDDAGRIRQQLGEASRIVVLGGGFIGLEIASSACKMGKHVTVIERAPRLLSRVVSEAFATFIGDIHLGNGIELRLGEEVREVRRCTSGVRVDAVFLSDGQLLECDMLVIGVGSEPRMELATAAGLACASGVLVDEHCHTSDPFISAIGDCVAVCPSPGHQLPRRESVQNATEQARLVAARLSGRPVPPVQTPWFWSDQLQARINLAGERPAQGQVIVRRYGGDKVSMLYLQDQQLVAIEACNMPGDCLLARRAIGQNHSLDLARLVDADVPLKDALHFA.

Position 7–38 (7–38 (TTVIVGAGHAGTAAAFFLREFGYHGRVLLLSA)) interacts with FAD. 151 to 159 (GGGFIGLEI) contacts NAD(+).

The cofactor is FAD.

Its function is as follows. The oxidation of alpha-terpineol by cytochrome p450-TERP requires the participation of a flavoprotein, terpredoxin reductase, and an iron-sulfur protein, terpredoxin, to mediate the transfer of electrons from NADH to P450 for oxygen activation. This Pseudomonas sp protein is Terpredoxin reductase (terPA).